Reading from the N-terminus, the 1254-residue chain is Vitamin B12-dependent ribonucleotide reductase (1254 aa).

Substrate-binding positions include serine 153, 198–199, glycine 230, 474–478, and 675–679; these read AC, NPCSE, and PTGTI. Residues cysteine 199 and cysteine 487 are joined by a disulfide bond. The Proton acceptor role is filled by asparagine 474. The active-site Cysteine radical intermediate is the cysteine 476. The active-site Proton acceptor is the glutamate 478.

This sequence belongs to the ribonucleoside diphosphate reductase class-2 family. The cofactor is adenosylcob(III)alamin.

It catalyses the reaction a 2'-deoxyribonucleoside 5'-diphosphate + [thioredoxin]-disulfide + H2O = a ribonucleoside 5'-diphosphate + [thioredoxin]-dithiol. Functionally, catalyzes the reduction of ribonucleotides to deoxyribonucleotides. May function to provide a pool of deoxyribonucleotide precursors for DNA repair during oxygen limitation and/or for immediate growth after restoration of oxygen. The protein is Vitamin B12-dependent ribonucleotide reductase (nrdJ) of Bradyrhizobium diazoefficiens (strain JCM 10833 / BCRC 13528 / IAM 13628 / NBRC 14792 / USDA 110).